The primary structure comprises 376 residues: Small RNA 2'-O-methyltransferase (376 aa).

The S-adenosyl-L-methionine site is built by threonine 49, aspartate 67, and serine 103. The Mg(2+) site is built by glutamate 121, glutamate 124, histidine 125, and histidine 171.

Belongs to the methyltransferase superfamily. HEN1 family. It depends on Mg(2+) as a cofactor.

The protein localises to the cytoplasm. It carries out the reaction small RNA 3'-end nucleotide + S-adenosyl-L-methionine = small RNA 3'-end 2'-O-methylnucleotide + S-adenosyl-L-homocysteine + H(+). Functionally, methyltransferase that adds a 2'-O-methyl group at the 3'-end of piRNAs, a class of 24 to 30 nucleotide RNAs that are generated by a Dicer-independent mechanism and are primarily derived from transposons and other repeated sequence elements. This probably protects the 3'-end of piRNAs from uridylation activity and subsequent degradation. Stabilization of piRNAs is essential for gametogenesis. This Gallus gallus (Chicken) protein is Small RNA 2'-O-methyltransferase (HENMT1).